A 60-amino-acid polypeptide reads, in one-letter code: Large ribosomal subunit protein bL32 (60 aa).

Residues 1–60 (MAVQQNKKSPSKRGMHRSHDFLVNPATAIEPNTGETHLRHHISPNGFYRGRKVLKTKADE) form a disordered region. The segment covering 49 to 60 (RGRKVLKTKADE) has biased composition (basic residues).

It belongs to the bacterial ribosomal protein bL32 family.

The protein is Large ribosomal subunit protein bL32 of Bordetella bronchiseptica (strain ATCC BAA-588 / NCTC 13252 / RB50) (Alcaligenes bronchisepticus).